We begin with the raw amino-acid sequence, 266 residues long: MPSNDYWQFPAIDPVLFHIWGPLDIRWYGLAYIAAFAFAYFWGMRQTKTDPNWSKEEFSDLMFWGFIGVILGGRIGYTLFYHFDYFIDNPLYLFYIHEGGMSFHGGLLGVIAAMYLYARKKQRSFLQVGDFVAPLVPMGLFFGRIGNFINGELWGRAAEVPWAMYFPSGGPVPRHPSQLYEALLEGLLLFAVILWFQRKPRGVGAVSGLFLLGYGVARFIVEFFREPDAHLGLLSLGMSMGQWLTLPMIILGIILMVRAKKQLPTG.

Helical transmembrane passes span Ile19–Ala39, Leu61–Tyr81, Leu91–Ile111, Phe125–Ile145, Pro176–Phe196, Gly204–Phe224, and Gly237–Val257. Arg144 is an a 1,2-diacyl-sn-glycero-3-phospho-(1'-sn-glycerol) binding site.

This sequence belongs to the Lgt family.

Its subcellular location is the cell inner membrane. The enzyme catalyses L-cysteinyl-[prolipoprotein] + a 1,2-diacyl-sn-glycero-3-phospho-(1'-sn-glycerol) = an S-1,2-diacyl-sn-glyceryl-L-cysteinyl-[prolipoprotein] + sn-glycerol 1-phosphate + H(+). The protein operates within protein modification; lipoprotein biosynthesis (diacylglyceryl transfer). Functionally, catalyzes the transfer of the diacylglyceryl group from phosphatidylglycerol to the sulfhydryl group of the N-terminal cysteine of a prolipoprotein, the first step in the formation of mature lipoproteins. This Idiomarina loihiensis (strain ATCC BAA-735 / DSM 15497 / L2-TR) protein is Phosphatidylglycerol--prolipoprotein diacylglyceryl transferase.